Here is a 115-residue protein sequence, read N- to C-terminus: Tyrosine-protein phosphatase 24 (115 aa).

The Tyrosine-protein phosphatase domain maps to 1-115 (WMMIVEQKCR…ETGSDAPMVV (115 aa)). Residue aspartate 83 coordinates substrate.

It belongs to the protein-tyrosine phosphatase family.

It carries out the reaction O-phospho-L-tyrosyl-[protein] + H2O = L-tyrosyl-[protein] + phosphate. The protein is Tyrosine-protein phosphatase 24 (STY-24) of Styela plicata (Wrinkled sea squirt).